The sequence spans 194 residues: Endoribonuclease YbeY (194 aa).

Zn(2+)-binding residues include His-151, His-155, and His-161.

Belongs to the endoribonuclease YbeY family. Requires Zn(2+) as cofactor.

The protein localises to the cytoplasm. In terms of biological role, single strand-specific metallo-endoribonuclease involved in late-stage 70S ribosome quality control and in maturation of the 3' terminus of the 16S rRNA. The sequence is that of Endoribonuclease YbeY from Gloeobacter violaceus (strain ATCC 29082 / PCC 7421).